Reading from the N-terminus, the 135-residue chain is Allatotropins (135 aa).

The signal sequence occupies residues 1 to 22 (MNFSMHLVLAVAAAACLCVVTA). F51 is modified (phenylalanine amide). Positions 55 to 135 (DRPHTRAELY…SSEELLRNVA (81 aa)) are excised as a propeptide.

In terms of tissue distribution, allatotropin: Expressed in corpora cardiaca (CC), corpora allata (CA), antennal lobe (AL) and gnathal ganglion (GNG) (protein level). Expression in AL detected in all animals, expression in GNG detected in most animals and expression in CA and CC detected in few animals (at protein level). Allatotropin-PP-1: Expressed in corpora cardiaca (CC), corpora allata (CA), antennal lobe (AL) and gnathal ganglion (GNG) (at protein level). Expression in AL detected in all animals and expression in GNG, CA and CC detected in some animals (at protein level).

The protein localises to the secreted. Neuropeptide stimulator of juvenile hormone synthesis. The sequence is that of Allatotropins from Agrotis ipsilon (Black cutworm moth).